The primary structure comprises 292 residues: 33 kDa chaperonin (292 aa).

2 disulfide bridges follow: Cys230–Cys232 and Cys263–Cys266.

It belongs to the HSP33 family. Under oxidizing conditions two disulfide bonds are formed involving the reactive cysteines. Under reducing conditions zinc is bound to the reactive cysteines and the protein is inactive.

It is found in the cytoplasm. Its function is as follows. Redox regulated molecular chaperone. Protects both thermally unfolding and oxidatively damaged proteins from irreversible aggregation. Plays an important role in the bacterial defense system toward oxidative stress. This Escherichia coli O17:K52:H18 (strain UMN026 / ExPEC) protein is 33 kDa chaperonin.